The following is a 196-amino-acid chain: UPF0056 membrane protein BU449 (196 aa).

Helical transmembrane passes span 8–28, 45–65, 71–91, 105–125, 134–154, and 174–194; these read TILLVLIMDPLGNLPIFMTIL, IIALIVMLLFLFVGEKILIIL, TVSISGGVILFLIAIKMIFPS, FLVPLAIPLVAGPSLLATLML, MFYLVGSLLISWFFTVIILLS, and MGLVLIMLSTQMFLDGIRAWF.

The protein belongs to the UPF0056 (MarC) family.

It is found in the cell membrane. The protein is UPF0056 membrane protein BU449 of Buchnera aphidicola subsp. Acyrthosiphon pisum (strain APS) (Acyrthosiphon pisum symbiotic bacterium).